Reading from the N-terminus, the 950-residue chain is General transcription factor II-I repeat domain-containing protein 2 (950 aa).

2 GTF2I-like repeats span residues 100–194 and 324–418; these read QVDS…QPGG and LSSL…SNVG.

Belongs to the TFII-I family.

The protein resides in the nucleus. This is General transcription factor II-I repeat domain-containing protein 2 (GTF2IRD2) from Bos taurus (Bovine).